The chain runs to 470 residues: Ribosomal protein uS12 methylthiotransferase RimO (470 aa).

The tract at residues 1 to 27 is disordered; it reads MPCQAPHSDSNVKNPSEATNQKDHSPR. Positions 7 to 19 are enriched in polar residues; it reads HSDSNVKNPSEAT. One can recognise an MTTase N-terminal domain in the interval 26–141; sequence PRVGFVSLGC…VMQAVHTHLP (116 aa). 6 residues coordinate [4Fe-4S] cluster: C35, C71, C100, C172, C176, and C179. The 242-residue stretch at 158–399 folds into the Radical SAM core domain; that stretch reads LTPKHYAYLK…MEVAEAVSAR (242 aa). Residues 402–470 form the TRAM domain; sequence QRKVGQTLRV…ADGHDLWGEV (69 aa).

This sequence belongs to the methylthiotransferase family. RimO subfamily. [4Fe-4S] cluster serves as cofactor.

The protein localises to the cytoplasm. It carries out the reaction L-aspartate(89)-[ribosomal protein uS12]-hydrogen + (sulfur carrier)-SH + AH2 + 2 S-adenosyl-L-methionine = 3-methylsulfanyl-L-aspartate(89)-[ribosomal protein uS12]-hydrogen + (sulfur carrier)-H + 5'-deoxyadenosine + L-methionine + A + S-adenosyl-L-homocysteine + 2 H(+). Functionally, catalyzes the methylthiolation of an aspartic acid residue of ribosomal protein uS12. The polypeptide is Ribosomal protein uS12 methylthiotransferase RimO (Cupriavidus taiwanensis (strain DSM 17343 / BCRC 17206 / CCUG 44338 / CIP 107171 / LMG 19424 / R1) (Ralstonia taiwanensis (strain LMG 19424))).